The sequence spans 435 residues: MAEAAAASTAASGVIGGWTKHVTCRYFMHGLCKEGDNCRYSHDLTNSKPAAMICKFFQKGNCVFGDRCRFEHCKPAKNEELPAPQMLPLPSASLAGPSDPEPSGPTPVPGAQDWVNAAEFVPGQPYCGRAEQAKVESSVPLIEEFDSYPAPDNKQLRKQLCPYAAVGECRYGINCAYLHGDVCYMCGLQVLHPTDNNQRSEHTKACIEAHEKDMEISFAIQRSKDMMCGVCMEVVFEKANPSERRFGILSNCSHCYCLKCIRKWRSAKQFESKIIKSCPECRITSNFVIPSEYWVEDKDDKQKLIQKYKDGMGSKPCRYFDEGRGTCPFGSNCFYKHAFPDGRLEEAQPQRRQTGSNSRNRNSRRTPLWDIYDERESTDSFDNEDEEMVTFELSEMLLMLLAAGTDDEEVIIRPPSCATSSGRLDPTVTRYRKAC.

2 consecutive C3H1-type zinc fingers follow at residues 18–45 (WTKH…HDLT) and 48–75 (KPAA…HCKP). Residues 81 to 109 (LPAPQMLPLPSASLAGPSDPEPSGPTPVP) are disordered. A compositionally biased stretch (pro residues) spans 99-108 (DPEPSGPTPV). Residues 155 to 182 (QLRKQLCPYAAVGECRYGINCAYLHGDV) form a C3H1-type 3 zinc finger. The segment at 183–210 (CYMCGLQVLHPTDNNQRSEHTKACIEAH) is makorin-type Cys-His. Residues 228 to 282 (CGVCMEVVFEKANPSERRFGILSNCSHCYCLKCIRKWRSAKQFESKIIKSCPECR) form an RING-type zinc finger. The segment at 311-340 (GMGSKPCRYFDEGRGTCPFGSNCFYKHAFP) adopts a C3H1-type 4 zinc-finger fold. The segment at 345 to 369 (EEAQPQRRQTGSNSRNRNSRRTPLW) is disordered.

In terms of tissue distribution, weakly expressed in adult brain, heart and kidney.

It carries out the reaction S-ubiquitinyl-[E2 ubiquitin-conjugating enzyme]-L-cysteine + [acceptor protein]-L-lysine = [E2 ubiquitin-conjugating enzyme]-L-cysteine + N(6)-ubiquitinyl-[acceptor protein]-L-lysine.. The protein operates within protein modification; protein ubiquitination. Its function is as follows. E3 ubiquitin ligase catalyzing the covalent attachment of ubiquitin moieties onto substrate proteins. The polypeptide is Probable E3 ubiquitin-protein ligase makorin-1 (Seriola quinqueradiata (Five-ray yellowtail)).